The primary structure comprises 75 residues: Tautomerase PptA (75 aa).

The active-site Proton acceptor; via imino nitrogen is the Pro2.

It belongs to the 4-oxalocrotonate tautomerase family. PptA subfamily. As to quaternary structure, homodimer.

It is found in the cytoplasm. The polypeptide is Tautomerase PptA (Shigella sonnei (strain Ss046)).